Reading from the N-terminus, the 115-residue chain is Large ribosomal subunit protein bL19 (115 aa).

Belongs to the bacterial ribosomal protein bL19 family.

This protein is located at the 30S-50S ribosomal subunit interface and may play a role in the structure and function of the aminoacyl-tRNA binding site. This Streptococcus equi subsp. zooepidemicus (strain H70) protein is Large ribosomal subunit protein bL19.